The sequence spans 287 residues: MSTDALSDSPLKIGSHTLTSRLLVGTGRYDTMEQMRDSLDASGTECVTVAVRRERLYERTGQNILDFIDSDRYILLPNTAGCYTAADAVRAANLGREILRTLGNPGSDWVKLEVLGDSKTLLPDPVETVAACEQLAADGFSVLCYTSDCPVTAQRLKKVGAAAVMPAGSPIGSGAGILNPANLQIILEYLKEDDEDYPVIIDAGVGTASDVSVAMELGADGVLLNTAIAHAREPVRMAHAMRMAVDAGRHAALAGRIPKRLYGTASSPQEGVISTRPYGSQADEIGS.

Catalysis depends on Lys-111, which acts as the Schiff-base intermediate with DXP. 1-deoxy-D-xylulose 5-phosphate contacts are provided by residues Gly-172, 203–204 (AG), and 225–226 (NT). Positions 268–287 (PQEGVISTRPYGSQADEIGS) are disordered.

Belongs to the ThiG family. In terms of assembly, homotetramer. Forms heterodimers with either ThiH or ThiS.

It localises to the cytoplasm. The catalysed reaction is [ThiS sulfur-carrier protein]-C-terminal-Gly-aminoethanethioate + 2-iminoacetate + 1-deoxy-D-xylulose 5-phosphate = [ThiS sulfur-carrier protein]-C-terminal Gly-Gly + 2-[(2R,5Z)-2-carboxy-4-methylthiazol-5(2H)-ylidene]ethyl phosphate + 2 H2O + H(+). Its pathway is cofactor biosynthesis; thiamine diphosphate biosynthesis. Catalyzes the rearrangement of 1-deoxy-D-xylulose 5-phosphate (DXP) to produce the thiazole phosphate moiety of thiamine. Sulfur is provided by the thiocarboxylate moiety of the carrier protein ThiS. In vitro, sulfur can be provided by H(2)S. The sequence is that of Thiazole synthase from Rhodopirellula baltica (strain DSM 10527 / NCIMB 13988 / SH1).